Consider the following 1290-residue polypeptide: DNA-directed RNA polymerase subunit beta' (1290 aa).

Zn(2+)-binding residues include C60, C62, C75, and C78. D535, D537, and D539 together coordinate Mg(2+). C875, C953, C960, and C963 together coordinate Zn(2+).

This sequence belongs to the RNA polymerase beta' chain family. The RNAP catalytic core consists of 2 alpha, 1 beta, 1 beta' and 1 omega subunit. When a sigma factor is associated with the core the holoenzyme is formed, which can initiate transcription. Mg(2+) is required as a cofactor. Requires Zn(2+) as cofactor.

The catalysed reaction is RNA(n) + a ribonucleoside 5'-triphosphate = RNA(n+1) + diphosphate. DNA-dependent RNA polymerase catalyzes the transcription of DNA into RNA using the four ribonucleoside triphosphates as substrates. This Nocardioides sp. (strain ATCC BAA-499 / JS614) protein is DNA-directed RNA polymerase subunit beta'.